A 55-amino-acid polypeptide reads, in one-letter code: MIFRSIFKKFSTEEEETKKKSVAKTNSFWFILISASSFLIYSLFHKKRLLGTATA.

A helical membrane pass occupies residues 27–44; it reads SFWFILISASSFLIYSLF.

Its subcellular location is the membrane. This is an uncharacterized protein from Dictyostelium discoideum (Social amoeba).